Reading from the N-terminus, the 104-residue chain is L-rhamnose mutarotase (104 aa).

Tyr-18 contacts substrate. The Proton donor role is filled by His-22. Residues Tyr-41 and 76 to 77 (WW) contribute to the substrate site.

It belongs to the rhamnose mutarotase family. Homodimer.

Its subcellular location is the cytoplasm. It catalyses the reaction alpha-L-rhamnose = beta-L-rhamnose. Its pathway is carbohydrate metabolism; L-rhamnose metabolism. Its function is as follows. Involved in the anomeric conversion of L-rhamnose. In Escherichia coli O1:K1 / APEC, this protein is L-rhamnose mutarotase.